We begin with the raw amino-acid sequence, 272 residues long: Heat stress transcription factor A-7a (272 aa).

Positions 1–26 are disordered; it reads MMNPFLPEGCDPPPPPQPMEGLHENA. Residues 27 to 121 mediate DNA binding; it reads PPPFLTKTFE…LLKNIKRRNP (95 aa). The tract at residues 132-186 is hydrophobic repeat HR-A/B; it reads ACNELRREKQVLMMEIVSLRQQQQTTKSYIKAMEQRIEGTERKQRQMMSFLARAM. The Bipartite nuclear localization signal motif lies at 201–216; sequence KKIKELEDNESAKRKR. A compositionally biased stretch (basic and acidic residues) spans 203–212; it reads IKELEDNESA. The segment at 203-223 is disordered; sequence IKELEDNESAKRKRGSSSMSE. Residues 256–265 carry the AHA motif; the sequence is DGFWEELLSD.

Belongs to the HSF family. Class A subfamily. Homotrimer. In terms of processing, exhibits temperature-dependent phosphorylation.

Its subcellular location is the nucleus. Transcriptional activator that specifically binds DNA sequence 5'-AGAAnnTTCT-3' known as heat shock promoter elements (HSE). In Arabidopsis thaliana (Mouse-ear cress), this protein is Heat stress transcription factor A-7a (HSFA7A).